We begin with the raw amino-acid sequence, 504 residues long: MDPAAIFLILAIPIASVYLLFYHKKRVNGLSSPPGPRGLPFIGHFYQIYKSECAHEYISNLSKQYGSLMTLHLGSVPALVVSSPKMAQEVLKTQDLVFCSRAQMTGSGKLSYNGLEMAFAPYGEHWRNVRKMCTLELFTQKRAQFNFRPVREDEVSRMVGRLSEAAAASEDVNAYECFTNFATSIISRVAFGKRYDEDNLGKEKFQRMVADIEAMFAAFFVSDFFPMFGWIDRLSGVKAVLDRNFNEMDTFYQELIDEHLKPDRPESLNGDLIDVMLKNKGSFLTMDSIKAILLNVFSGGIGTTGSALVFAMTALLRNQRVMKKAQEEVRSVIGKKEIVDEDDIQKLPYLRAVVKETLRLYPPGPLLIPRVAMESCVLGEDEDHMYMIKPNTIVYVNTWGIGRDPKYWKNPLEFMPERFFERPDLNYTGQQFEYLPFGSGRRICAGIIIGQNNVEVGLANLLYSFDWEPPTGKTFEDIDDQPCNGLTLAKKNPLYIRPKIYVHP.

The helical transmembrane segment at 3–23 (PAAIFLILAIPIASVYLLFYH) threads the bilayer. The substrate specificity stretch occupies residues 363–368 (PGPLLI). Cys444 is a binding site for heme.

The protein belongs to the cytochrome P450 family. It depends on heme as a cofactor.

Its subcellular location is the microsome membrane. The enzyme catalyses psoralen + reduced [NADPH--hemoprotein reductase] + O2 = xanthotoxol + oxidized [NADPH--hemoprotein reductase] + H2O + H(+). The catalysed reaction is 6-methoxycoumarin + reduced [NADPH--hemoprotein reductase] + O2 = scopoletin + oxidized [NADPH--hemoprotein reductase] + H2O + H(+). Its pathway is secondary metabolite biosynthesis. Involved in the biosynthesis of coumarins and furanocoumarins (FCs), natural products required for defense responses against attacks by predators with potential medical and agroindustrial usages such as anticoagulant, rodenticide and artificial vanilla substitutes. Catalyzes the conversion of psoralen into xanthotoxol and of 6-methoxycoumarin into scopoletin. Can also convert with a lower efficiency scopoletin into fraxetin and 7-methoxycoumarin into daphnetin-7-methylether, and use 7-methoxy-3-methylcoumarin as substrate. The polypeptide is Xanthotoxol synthase (Pastinaca sativa (Wild parsnip)).